We begin with the raw amino-acid sequence, 300 residues long: Heme A synthase (300 aa).

The Cytoplasmic segment spans residues 1 to 8 (MLKEKNLK). Residues 9-29 (WLSLFTTVLMLFVQIGGALVT) traverse the membrane as a helical segment. Residues 30-64 (KTGSADGCGSSWPLCHGKFVPTHIPKETLIELAHR) lie on the Extracellular side of the membrane. Cys37 and Cys44 are joined by a disulfide. Residue Glu60 is part of the active site. His63 contacts heme o. A helical membrane pass occupies residues 65–85 (GVSGLALLSVTWLVILSIKYI). Over 86 to 92 (GHKKETK) the chain is Cytoplasmic. The chain crosses the membrane as a helical span at residues 93-113 (FLCYMSIGFIFAQALIGAAAV). At 114-123 (MWQQNGFVLA) the chain is on the extracellular side. Residues 124-144 (LHFGISLISFSAVFLLTLLIF) form a helical membrane-spanning segment. A heme o-binding site is contributed by His125. At 145 to 163 (EVDQKFDATKLILQPKLRR) the chain is on the cytoplasmic side. Residues 164-184 (HTIGLTSFIYFVIYSGALVRH) form a helical membrane-spanning segment. Residues 185–218 (EKASLACSSWPLCRKGAFILPQNFYEWVQMSHRT) are Extracellular-facing. A disulfide bridge connects residues Cys191 and Cys197. His216 lines the heme b pocket. A helical transmembrane segment spans residues 219–239 (LAFILFIWLTYVAFHAMRNYA). Residues 240–249 (QYRVIKYGYM) lie on the Cytoplasmic side of the membrane. A helical transmembrane segment spans residues 250 to 270 (IAFILICLQVTTGALTIFTAV). Residues 271-275 (NLYIA) are Extracellular-facing. A helical transmembrane segment spans residues 276–296 (LLHALFITLLFGLLCYFILLI). Residue His278 participates in heme b binding. The Cytoplasmic segment spans residues 297–300 (SRAK).

This sequence belongs to the COX15/CtaA family. Type 1 subfamily. In terms of assembly, interacts with CtaB. It depends on heme b as a cofactor.

It is found in the cell membrane. It carries out the reaction Fe(II)-heme o + 2 A + H2O = Fe(II)-heme a + 2 AH2. It participates in porphyrin-containing compound metabolism; heme A biosynthesis; heme A from heme O: step 1/1. In terms of biological role, catalyzes the conversion of heme O to heme A by two successive hydroxylations of the methyl group at C8. The first hydroxylation forms heme I, the second hydroxylation results in an unstable dihydroxymethyl group, which spontaneously dehydrates, resulting in the formyl group of heme A. In Macrococcus caseolyticus (strain JCSC5402) (Macrococcoides caseolyticum), this protein is Heme A synthase.